The primary structure comprises 355 residues: Uroporphyrinogen decarboxylase (355 aa).

Substrate-binding positions include 27–31, Asp77, Tyr154, Thr209, and His328; that span reads RQAGR.

This sequence belongs to the uroporphyrinogen decarboxylase family. As to quaternary structure, homodimer.

It is found in the cytoplasm. It carries out the reaction uroporphyrinogen III + 4 H(+) = coproporphyrinogen III + 4 CO2. The protein operates within porphyrin-containing compound metabolism; protoporphyrin-IX biosynthesis; coproporphyrinogen-III from 5-aminolevulinate: step 4/4. Catalyzes the decarboxylation of four acetate groups of uroporphyrinogen-III to yield coproporphyrinogen-III. This chain is Uroporphyrinogen decarboxylase, found in Vibrio campbellii (strain ATCC BAA-1116).